The following is a 188-amino-acid chain: Transmembrane protein 160 (188 aa).

The transit peptide at 1 to 96 (MGGGWWWARA…ISFMQSDMGR (96 aa)) directs the protein to the mitochondrion. Positions 25–52 (PPRPRSGGARGSFAPGHGPRAGASPPPV) are disordered. Residues 29 to 38 (RSGGARGSFA) show a composition bias toward low complexity. The residue at position 48 (Ser-48) is a Phosphoserine. 2 helical membrane passes run 102–122 (FFLL…VGLA) and 135–155 (AAAG…AVGL).

It belongs to the TMEM160 family.

Its subcellular location is the mitochondrion inner membrane. The chain is Transmembrane protein 160 from Bos taurus (Bovine).